A 243-amino-acid polypeptide reads, in one-letter code: DNA repair protein RecO (243 aa).

This sequence belongs to the RecO family.

Involved in DNA repair and RecF pathway recombination. The chain is DNA repair protein RecO from Caulobacter sp. (strain K31).